Here is a 352-residue protein sequence, read N- to C-terminus: Uroporphyrinogen decarboxylase (352 aa).

Residues 27–31, aspartate 77, tyrosine 154, threonine 209, and histidine 325 each bind substrate; that span reads RQAGR.

Belongs to the uroporphyrinogen decarboxylase family. Homodimer.

The protein localises to the cytoplasm. The catalysed reaction is uroporphyrinogen III + 4 H(+) = coproporphyrinogen III + 4 CO2. It participates in porphyrin-containing compound metabolism; protoporphyrin-IX biosynthesis; coproporphyrinogen-III from 5-aminolevulinate: step 4/4. Functionally, catalyzes the decarboxylation of four acetate groups of uroporphyrinogen-III to yield coproporphyrinogen-III. The protein is Uroporphyrinogen decarboxylase of Legionella pneumophila (strain Paris).